We begin with the raw amino-acid sequence, 138 residues long: Large ribosomal subunit protein uL16 (138 aa).

The segment covering 1 to 19 has biased composition (basic residues); the sequence is MLIPKRVKYRRQHRPHRSG. The segment at 1–24 is disordered; sequence MLIPKRVKYRRQHRPHRSGVSKGG.

This sequence belongs to the universal ribosomal protein uL16 family. In terms of assembly, part of the 50S ribosomal subunit.

Binds 23S rRNA and is also seen to make contacts with the A and possibly P site tRNAs. This Corynebacterium jeikeium (strain K411) protein is Large ribosomal subunit protein uL16.